A 293-amino-acid polypeptide reads, in one-letter code: Elongation factor Ts (293 aa).

The segment at 81–84 (TDFV) is involved in Mg(2+) ion dislocation from EF-Tu.

Belongs to the EF-Ts family.

Its subcellular location is the cytoplasm. Its function is as follows. Associates with the EF-Tu.GDP complex and induces the exchange of GDP to GTP. It remains bound to the aminoacyl-tRNA.EF-Tu.GTP complex up to the GTP hydrolysis stage on the ribosome. This Teredinibacter turnerae (strain ATCC 39867 / T7901) protein is Elongation factor Ts.